The sequence spans 159 residues: Ribosomal RNA large subunit methyltransferase H (159 aa).

Residues Leu-76, Gly-107, and 126–131 (LSKLTM) each bind S-adenosyl-L-methionine.

The protein belongs to the RNA methyltransferase RlmH family. Homodimer.

The protein localises to the cytoplasm. The catalysed reaction is pseudouridine(1915) in 23S rRNA + S-adenosyl-L-methionine = N(3)-methylpseudouridine(1915) in 23S rRNA + S-adenosyl-L-homocysteine + H(+). Its function is as follows. Specifically methylates the pseudouridine at position 1915 (m3Psi1915) in 23S rRNA. The polypeptide is Ribosomal RNA large subunit methyltransferase H (Acinetobacter baylyi (strain ATCC 33305 / BD413 / ADP1)).